Consider the following 312-residue polypeptide: Structure-specific endonuclease subunit SLX1 (312 aa).

Residues 9–92 (DFYGCYLLQS…QHGYQTRYIK (84 aa)) enclose the GIY-YIG domain. The SLX1-type zinc-finger motif lies at 219–282 (CQFCNKIIKH…IPQSPKCPKC (64 aa)).

Belongs to the SLX1 family. Forms a heterodimer with SLX4. The cofactor is a divalent metal cation.

The protein localises to the nucleus. Functionally, catalytic subunit of the SLX1-SLX4 structure-specific endonuclease that resolves DNA secondary structures generated during DNA repair and recombination. Has endonuclease activity towards branched DNA substrates, introducing single-strand cuts in duplex DNA close to junctions with ss-DNA. The sequence is that of Structure-specific endonuclease subunit SLX1 from Candida glabrata (strain ATCC 2001 / BCRC 20586 / JCM 3761 / NBRC 0622 / NRRL Y-65 / CBS 138) (Yeast).